The primary structure comprises 132 residues: Small ribosomal subunit protein uS8 (132 aa).

It belongs to the universal ribosomal protein uS8 family. In terms of assembly, part of the 30S ribosomal subunit. Contacts proteins S5 and S12.

Functionally, one of the primary rRNA binding proteins, it binds directly to 16S rRNA central domain where it helps coordinate assembly of the platform of the 30S subunit. The protein is Small ribosomal subunit protein uS8 of Limosilactobacillus fermentum (strain NBRC 3956 / LMG 18251) (Lactobacillus fermentum).